A 541-amino-acid chain; its full sequence is Putative apolipoprotein N-acyltransferase (541 aa).

6 helical membrane-spanning segments follow: residues 31-51, 65-85, 89-109, 144-164, 181-201, and 215-235; these read PLPA…AAHA, GWLF…VSMH, GLAA…LALF, AACW…FPWL, LLGV…LAGL, and LAAG…QFSW. The CN hydrolase domain occupies 248-511; that stretch reads VQGNVEQSQK…AGVLPVAVQG (264 aa). Glutamate 292 functions as the Proton acceptor in the catalytic mechanism. Lysine 366 is an active-site residue. The Nucleophile role is filled by cysteine 416.

This sequence belongs to the CN hydrolase family. Apolipoprotein N-acyltransferase subfamily.

The protein localises to the cell inner membrane. It carries out the reaction N-terminal S-1,2-diacyl-sn-glyceryl-L-cysteinyl-[lipoprotein] + a glycerophospholipid = N-acyl-S-1,2-diacyl-sn-glyceryl-L-cysteinyl-[lipoprotein] + a 2-acyl-sn-glycero-3-phospholipid + H(+). It participates in protein modification; lipoprotein biosynthesis (N-acyl transfer). In terms of biological role, catalyzes the phospholipid dependent N-acylation of the N-terminal cysteine of apolipoprotein, the last step in lipoprotein maturation. This Bordetella parapertussis (strain 12822 / ATCC BAA-587 / NCTC 13253) protein is Putative apolipoprotein N-acyltransferase.